We begin with the raw amino-acid sequence, 274 residues long: CTO1 family protein C17G9.12c (274 aa).

Belongs to the CTO1 family.

Its subcellular location is the cytoplasm. It localises to the nucleus. This chain is CTO1 family protein C17G9.12c, found in Schizosaccharomyces pombe (strain 972 / ATCC 24843) (Fission yeast).